The following is a 382-amino-acid chain: Lipid-A-disaccharide synthase (382 aa).

The protein belongs to the LpxB family.

The catalysed reaction is 2-N,3-O-bis[(3R)-3-hydroxytetradecanoyl]-alpha-D-glucosaminyl 1-phosphate + UDP-2-N,3-O-bis[(3R)-3-hydroxytetradecanoyl]-alpha-D-glucosamine = lipid A disaccharide (E. coli) + UDP + H(+). It catalyses the reaction a lipid X + a UDP-2-N,3-O-bis[(3R)-3-hydroxyacyl]-alpha-D-glucosamine = a lipid A disaccharide + UDP + H(+). Its pathway is glycolipid biosynthesis; lipid IV(A) biosynthesis; lipid IV(A) from (3R)-3-hydroxytetradecanoyl-[acyl-carrier-protein] and UDP-N-acetyl-alpha-D-glucosamine: step 5/6. Its function is as follows. Condensation of UDP-2,3-diacylglucosamine and 2,3-diacylglucosamine-1-phosphate to form lipid A disaccharide, a precursor of lipid A, a phosphorylated glycolipid that anchors the lipopolysaccharide to the outer membrane of the cell. The sequence is that of Lipid-A-disaccharide synthase from Escherichia coli (strain SMS-3-5 / SECEC).